The following is a 272-amino-acid chain: 1,4-dihydroxy-2-naphthoyl-CoA synthase (272 aa).

Substrate-binding positions include R33, 72 to 76, Y84, 116 to 120, T142, S148, Y245, and K260; these read SGGDQ and YAIGG. Position 141–143 (141–143) interacts with hydrogencarbonate; the sequence is QTG. Over residues 253 to 264 the composition is skewed to basic and acidic residues; the sequence is GRDAFKEKRDPD. The disordered stretch occupies residues 253–272; sequence GRDAFKEKRDPDFDQFPKFP.

The protein belongs to the enoyl-CoA hydratase/isomerase family. MenB subfamily. It depends on hydrogencarbonate as a cofactor.

It carries out the reaction 2-succinylbenzoyl-CoA + H(+) = 1,4-dihydroxy-2-naphthoyl-CoA + H2O. The protein operates within quinol/quinone metabolism; 1,4-dihydroxy-2-naphthoate biosynthesis; 1,4-dihydroxy-2-naphthoate from chorismate: step 6/7. Its pathway is quinol/quinone metabolism; menaquinone biosynthesis. Its function is as follows. Converts o-succinylbenzoyl-CoA (OSB-CoA) to 1,4-dihydroxy-2-naphthoyl-CoA (DHNA-CoA). The chain is 1,4-dihydroxy-2-naphthoyl-CoA synthase from Staphylococcus haemolyticus (strain JCSC1435).